Reading from the N-terminus, the 285-residue chain is Small ribosomal subunit protein uS2 (285 aa).

The disordered stretch occupies residues 262–285; the sequence is NDDWNEDDTAPAAPGAASWGGAAF. Residues 271–285 are compositionally biased toward low complexity; that stretch reads APAAPGAASWGGAAF.

It belongs to the universal ribosomal protein uS2 family. In terms of assembly, component of the small ribosomal subunit. Mature ribosomes consist of a small (40S) and a large (60S) subunit. The 40S subunit contains about 33 different proteins and 1 molecule of RNA (18S). The 60S subunit contains about 49 different proteins and 3 molecules of RNA (28S, 5.8S and 5S). Interacts with ribosomal protein S21.

It is found in the cytoplasm. Required for the assembly and/or stability of the 40S ribosomal subunit. Required for the processing of the 20S rRNA-precursor to mature 18S rRNA in a late step of the maturation of 40S ribosomal subunits. The chain is Small ribosomal subunit protein uS2 from Anopheles gambiae (African malaria mosquito).